A 399-amino-acid polypeptide reads, in one-letter code: Probable inactive 2-oxoglutarate-dependent dioxygenase AOP2 (399 aa).

Positions 248–345 (GGDDVEANDD…RYTAAIFTCP (98 aa)) constitute a Fe2OG dioxygenase domain. Fe cation is bound by residues H268, D270, and H325. R336 serves as a coordination point for 2-oxoglutarate.

Belongs to the iron/ascorbate-dependent oxidoreductase family. Fe(2+) serves as cofactor.

The protein is Probable inactive 2-oxoglutarate-dependent dioxygenase AOP2 (AOP2) of Arabidopsis thaliana (Mouse-ear cress).